The sequence spans 747 residues: Histone-lysine N-methyltransferase EZH1 (747 aa).

The tract at residues 188 to 231 (DEEEDGHNDPSDGKQDDSKEDLPVTRKRKRHAIEGNKKSSKKQF) is disordered. Over residues 194–211 (HNDPSDGKQDDSKEDLPV) the composition is skewed to basic and acidic residues. Lys327 participates in a covalent cross-link: Glycyl lysine isopeptide (Lys-Gly) (interchain with G-Cter in SUMO2). A disordered region spans residues 368–414 (VSASCSNASASAMAETKEGDSDRDTGNDWASSSSEANSRCQTPTKQK). Residues 369-381 (SASCSNASASAMA) show a composition bias toward low complexity. A compositionally biased stretch (basic and acidic residues) spans 382 to 393 (ETKEGDSDRDTG). Over residues 395-414 (DWASSSSEANSRCQTPTKQK) the composition is skewed to polar residues. The short motif at 491–496 (QKKKRK) is the Nuclear localization signal element. One can recognise a CXC domain in the interval 504–606 (CRKIQLKKDN…CKVVSCKNCS (103 aa)). In terms of domain architecture, SET spans 613–728 (KHLLLAPSDV…AGEELFFDYR (116 aa)).

Belongs to the class V-like SAM-binding methyltransferase superfamily. Histone-lysine methyltransferase family. EZ subfamily. As to quaternary structure, component of the PRC2/EED-EZH1 complex, which includes EED, EZH1, SUZ12, RBBP4 and AEBP2. The PRC2/EED-EZH1 is less abundant than the PRC2/EED-EZH2 complex, has weak methyltransferase activity and compacts chromatin in the absence of the methyltransferase cofactor S-adenosyl-L-methionine (SAM). Interacts with EZHIP; the interaction blocks EZH1 methyltransferase activity. Expressed at high levels in kidney, adrenal gland, testis and brain.

Its subcellular location is the nucleus. It catalyses the reaction L-lysyl(27)-[histone H3] + 3 S-adenosyl-L-methionine = N(6),N(6),N(6)-trimethyl-L-lysyl(27)-[histone H3] + 3 S-adenosyl-L-homocysteine + 3 H(+). Polycomb group (PcG) protein. Catalytic subunit of the PRC2/EED-EZH1 complex, which methylates 'Lys-27' of histone H3, leading to transcriptional repression of the affected target gene. Able to mono-, di- and trimethylate 'Lys-27' of histone H3 to form H3K27me1, H3K27me2 and H3K27me3, respectively. Required for embryonic stem cell derivation and self-renewal, suggesting that it is involved in safeguarding embryonic stem cell identity. Compared to EZH2-containing complexes, it is less abundant in embryonic stem cells, has weak methyltransferase activity and plays a less critical role in forming H3K27me3, which is required for embryonic stem cell identity and proper differentiation. The polypeptide is Histone-lysine N-methyltransferase EZH1 (Ezh1) (Mus musculus (Mouse)).